We begin with the raw amino-acid sequence, 249 residues long: Probable transcriptional regulatory protein CYA_2259 (249 aa).

The protein belongs to the TACO1 family.

The protein localises to the cytoplasm. This Synechococcus sp. (strain JA-3-3Ab) (Cyanobacteria bacterium Yellowstone A-Prime) protein is Probable transcriptional regulatory protein CYA_2259.